The chain runs to 1025 residues: Presequence protease, mitochondrial (1025 aa).

Residue His90 participates in Zn(2+) binding. Glu93 functions as the Proton acceptor in the catalytic mechanism. His94 contacts Zn(2+). The active site involves Glu166. Zn(2+) is bound at residue Glu197.

The protein belongs to the peptidase M16 family. PreP subfamily. In terms of assembly, monomer and homodimer; homodimerization is induced by binding of the substrate. Zn(2+) serves as cofactor.

Its subcellular location is the mitochondrion intermembrane space. It localises to the mitochondrion matrix. Functionally, degrades mitochondrial transit peptides after their cleavage in the intermembrane space or in the matrix, and presequence peptides; clearance of these peptides is required to keep the presequence processing machinery running. Preferentially cleaves the N-terminal side of paired basic amino acid residues. Also degrades other unstructured peptides. May function as an ATP-dependent peptidase as opposed to a metalloendopeptidase. The chain is Presequence protease, mitochondrial (cym1) from Aspergillus oryzae (strain ATCC 42149 / RIB 40) (Yellow koji mold).